The following is a 404-amino-acid chain: Nicotinate phosphoribosyltransferase (404 aa).

Residue His-225 is modified to Phosphohistidine; by autocatalysis.

It belongs to the NAPRTase family. In terms of processing, transiently phosphorylated on a His residue during the reaction cycle. Phosphorylation strongly increases the affinity for substrates and increases the rate of nicotinate D-ribonucleotide production. Dephosphorylation regenerates the low-affinity form of the enzyme, leading to product release.

The catalysed reaction is nicotinate + 5-phospho-alpha-D-ribose 1-diphosphate + ATP + H2O = nicotinate beta-D-ribonucleotide + ADP + phosphate + diphosphate. It participates in cofactor biosynthesis; NAD(+) biosynthesis; nicotinate D-ribonucleotide from nicotinate: step 1/1. Functionally, catalyzes the synthesis of beta-nicotinate D-ribonucleotide from nicotinate and 5-phospho-D-ribose 1-phosphate at the expense of ATP. This is Nicotinate phosphoribosyltransferase from Acinetobacter baumannii (strain ATCC 17978 / DSM 105126 / CIP 53.77 / LMG 1025 / NCDC KC755 / 5377).